The chain runs to 213 residues: Protein-L-isoaspartate O-methyltransferase 1 (213 aa).

Ser-64 is an active-site residue.

The protein belongs to the methyltransferase superfamily. L-isoaspartyl/D-aspartyl protein methyltransferase family.

Its subcellular location is the cytoplasm. The catalysed reaction is [protein]-L-isoaspartate + S-adenosyl-L-methionine = [protein]-L-isoaspartate alpha-methyl ester + S-adenosyl-L-homocysteine. Its function is as follows. Catalyzes the methyl esterification of L-isoaspartyl residues in peptides and proteins that result from spontaneous decomposition of normal L-aspartyl and L-asparaginyl residues. It plays a role in the repair and/or degradation of damaged proteins. This Nitrosococcus oceani (strain ATCC 19707 / BCRC 17464 / JCM 30415 / NCIMB 11848 / C-107) protein is Protein-L-isoaspartate O-methyltransferase 1.